A 101-amino-acid polypeptide reads, in one-letter code: NAD(P)H-quinone oxidoreductase subunit 4L, chloroplastic (101 aa).

Helical transmembrane passes span 2 to 22 (IFQS…YGLL), 32 to 52 (MSLE…SNFV), and 61 to 81 (VLAL…LAII).

Belongs to the complex I subunit 4L family. As to quaternary structure, NDH is composed of at least 16 different subunits, 5 of which are encoded in the nucleus.

The protein resides in the plastid. It is found in the chloroplast thylakoid membrane. The catalysed reaction is a plastoquinone + NADH + (n+1) H(+)(in) = a plastoquinol + NAD(+) + n H(+)(out). It carries out the reaction a plastoquinone + NADPH + (n+1) H(+)(in) = a plastoquinol + NADP(+) + n H(+)(out). NDH shuttles electrons from NAD(P)H:plastoquinone, via FMN and iron-sulfur (Fe-S) centers, to quinones in the photosynthetic chain and possibly in a chloroplast respiratory chain. The immediate electron acceptor for the enzyme in this species is believed to be plastoquinone. Couples the redox reaction to proton translocation, and thus conserves the redox energy in a proton gradient. In Nephroselmis olivacea (Green alga), this protein is NAD(P)H-quinone oxidoreductase subunit 4L, chloroplastic.